We begin with the raw amino-acid sequence, 147 residues long: Sec-independent protein translocase protein TatB (147 aa).

The chain crosses the membrane as a helical span at residues 2–22 (FSSIGWPEIFTVLILGLIIIG). Positions 96–147 (FDPKKIMASGTEGEAYRERGINPQPAGDSASPQTPSNKESQPKAGFSWDDIT) are disordered. A compositionally biased stretch (polar residues) spans 125–134 (ASPQTPSNKE).

It belongs to the TatB family. As to quaternary structure, the Tat system comprises two distinct complexes: a TatABC complex, containing multiple copies of TatA, TatB and TatC subunits, and a separate TatA complex, containing only TatA subunits. Substrates initially bind to the TatABC complex, which probably triggers association of the separate TatA complex to form the active translocon.

Its subcellular location is the cell membrane. Part of the twin-arginine translocation (Tat) system that transports large folded proteins containing a characteristic twin-arginine motif in their signal peptide across membranes. Together with TatC, TatB is part of a receptor directly interacting with Tat signal peptides. TatB may form an oligomeric binding site that transiently accommodates folded Tat precursor proteins before their translocation. The protein is Sec-independent protein translocase protein TatB of Corynebacterium diphtheriae (strain ATCC 700971 / NCTC 13129 / Biotype gravis).